We begin with the raw amino-acid sequence, 326 residues long: Phospho-N-acetylmuramoyl-pentapeptide-transferase (326 aa).

The next 10 membrane-spanning stretches (helical) occupy residues Ile-4–Pro-24, Thr-49–Ile-69, Gly-74–Ile-94, Lys-109–Gly-129, Leu-151–Val-171, Gly-179–Ala-199, Gly-203–Phe-223, Val-228–Val-248, Leu-254–Ile-274, and Val-303–Tyr-323.

This sequence belongs to the glycosyltransferase 4 family. MraY subfamily. Requires Mg(2+) as cofactor.

Its subcellular location is the cell membrane. It carries out the reaction UDP-N-acetyl-alpha-D-muramoyl-L-alanyl-gamma-D-glutamyl-meso-2,6-diaminopimeloyl-D-alanyl-D-alanine + di-trans,octa-cis-undecaprenyl phosphate = di-trans,octa-cis-undecaprenyl diphospho-N-acetyl-alpha-D-muramoyl-L-alanyl-D-glutamyl-meso-2,6-diaminopimeloyl-D-alanyl-D-alanine + UMP. It functions in the pathway cell wall biogenesis; peptidoglycan biosynthesis. Catalyzes the initial step of the lipid cycle reactions in the biosynthesis of the cell wall peptidoglycan: transfers peptidoglycan precursor phospho-MurNAc-pentapeptide from UDP-MurNAc-pentapeptide onto the lipid carrier undecaprenyl phosphate, yielding undecaprenyl-pyrophosphoryl-MurNAc-pentapeptide, known as lipid I. This is Phospho-N-acetylmuramoyl-pentapeptide-transferase from Pelotomaculum thermopropionicum (strain DSM 13744 / JCM 10971 / SI).